A 226-amino-acid polypeptide reads, in one-letter code: 2-C-methyl-D-erythritol 4-phosphate cytidylyltransferase (226 aa).

This sequence belongs to the IspD/TarI cytidylyltransferase family. IspD subfamily.

The catalysed reaction is 2-C-methyl-D-erythritol 4-phosphate + CTP + H(+) = 4-CDP-2-C-methyl-D-erythritol + diphosphate. It functions in the pathway isoprenoid biosynthesis; isopentenyl diphosphate biosynthesis via DXP pathway; isopentenyl diphosphate from 1-deoxy-D-xylulose 5-phosphate: step 2/6. In terms of biological role, catalyzes the formation of 4-diphosphocytidyl-2-C-methyl-D-erythritol from CTP and 2-C-methyl-D-erythritol 4-phosphate (MEP). This Synechococcus sp. (strain CC9902) protein is 2-C-methyl-D-erythritol 4-phosphate cytidylyltransferase.